The sequence spans 127 residues: Fluoride-specific ion channel FluC (127 aa).

Helical transmembrane passes span 4 to 24, 39 to 59, 68 to 88, and 102 to 122; these read LDYL…YLVS, GTII…FAAI, AILF…TFTY, and VAYA…GMIL. Na(+) contacts are provided by Gly78 and Thr81.

The protein belongs to the fluoride channel Fluc/FEX (TC 1.A.43) family.

It localises to the cell inner membrane. The catalysed reaction is fluoride(in) = fluoride(out). With respect to regulation, na(+) is not transported, but it plays an essential structural role and its presence is essential for fluoride channel function. Its function is as follows. Fluoride-specific ion channel. Important for reducing fluoride concentration in the cell, thus reducing its toxicity. This Thermotoga petrophila (strain ATCC BAA-488 / DSM 13995 / JCM 10881 / RKU-1) protein is Fluoride-specific ion channel FluC.